The following is a 482-amino-acid chain: MELIFEKSKKGRKGYKLPELDVEEVNIKEYLPEEYLREELDFPEVSELDVVRHYTNLSHLNYAVDTTMVPLGSCTMKYNPRINEELVNKKEFLNVHPLTPEEYIQPLLKLVYELKELLKELGGFAEVSLQPAAGAHGELLGLLLIHAYHQDRGNKEKKVVLIPDSAHGTNPASAAICGFDIKVVKSDKKGELDFEDFIKKLDERVAALMITNPNTLGIFERKIKEIAEELHKRDALLYMDGANFNALVGRFKPGEWGVDVMHFNLHKTFSTPHGGGGPGAGPVGVSERLKPYLPVPQIEYDGKKYYLNWNIEKSVGKILAFHGHFLVWLKALAYILTYGKDIKKVSEYAVLNARYLKHLLKGVFKDPYPESPCMHEFVLSATNLTKYGVRASDVAKRILDYGFYAPTMYFPLIVREALMIEPTETENPDTLKKFALILRKIVKEAKEKPEILKKAPHRTPVRRIKEAEANRNLILKFKDIKE.

Residue lysine 267 is modified to N6-(pyridoxal phosphate)lysine.

Belongs to the GcvP family. C-terminal subunit subfamily. As to quaternary structure, the glycine cleavage system is composed of four proteins: P, T, L and H. In this organism, the P 'protein' is a heterodimer of two subunits. It depends on pyridoxal 5'-phosphate as a cofactor.

It catalyses the reaction N(6)-[(R)-lipoyl]-L-lysyl-[glycine-cleavage complex H protein] + glycine + H(+) = N(6)-[(R)-S(8)-aminomethyldihydrolipoyl]-L-lysyl-[glycine-cleavage complex H protein] + CO2. Its function is as follows. The glycine cleavage system catalyzes the degradation of glycine. The P protein binds the alpha-amino group of glycine through its pyridoxal phosphate cofactor; CO(2) is released and the remaining methylamine moiety is then transferred to the lipoamide cofactor of the H protein. This is Probable glycine dehydrogenase (decarboxylating) subunit 2 from Aquifex aeolicus (strain VF5).